A 437-amino-acid polypeptide reads, in one-letter code: Adenylyltransferase and sulfurtransferase MOCS3 (437 aa).

ATP contacts are provided by residues Gly-82, Asp-103, 110 to 114, Lys-127, and 171 to 172; these read TNLHR and DN. Residues Cys-212 and Cys-215 each coordinate Zn(2+). Residue Cys-229 is the Glycyl thioester intermediate; for adenylyltransferase activity of the active site. Zn(2+)-binding residues include Cys-287 and Cys-290. Positions 337 to 435 constitute a Rhodanese domain; it reads SNVPHLLVDV…WTHNIDPEFP (99 aa). The Cysteine persulfide intermediate; for sulfurtransferase activity role is filled by Cys-391.

It in the N-terminal section; belongs to the HesA/MoeB/ThiF family. UBA4 subfamily. Zn(2+) is required as a cofactor.

Its subcellular location is the cytoplasm. The protein localises to the cytosol. The enzyme catalyses [molybdopterin-synthase sulfur-carrier protein]-C-terminal Gly-Gly + ATP + H(+) = [molybdopterin-synthase sulfur-carrier protein]-C-terminal Gly-Gly-AMP + diphosphate. It carries out the reaction [molybdopterin-synthase sulfur-carrier protein]-C-terminal Gly-Gly-AMP + S-sulfanyl-L-cysteinyl-[cysteine desulfurase] + AH2 = [molybdopterin-synthase sulfur-carrier protein]-C-terminal-Gly-aminoethanethioate + L-cysteinyl-[cysteine desulfurase] + A + AMP + 2 H(+). Its pathway is tRNA modification; 5-methoxycarbonylmethyl-2-thiouridine-tRNA biosynthesis. It participates in cofactor biosynthesis; molybdopterin biosynthesis. Functionally, plays a central role in 2-thiolation of mcm(5)S(2)U at tRNA wobble positions of cytosolic tRNA(Lys), tRNA(Glu) and tRNA(Gln). Also essential during biosynthesis of the molybdenum cofactor. Acts by mediating the C-terminal thiocarboxylation of sulfur carriers URM1 and MOCS2A. Its N-terminus first activates URM1 and MOCS2A as acyl-adenylates (-COAMP), then the persulfide sulfur on the catalytic cysteine is transferred to URM1 and MOCS2A to form thiocarboxylation (-COSH) of their C-terminus. The reaction probably involves hydrogen sulfide that is generated from the persulfide intermediate and that acts as a nucleophile towards URM1 and MOCS2A. Subsequently, a transient disulfide bond is formed. Does not use thiosulfate as sulfur donor; NFS1 probably acting as a sulfur donor for thiocarboxylation reactions. This chain is Adenylyltransferase and sulfurtransferase MOCS3, found in Aedes aegypti (Yellowfever mosquito).